The sequence spans 182 residues: Heat shock protein beta-2 (182 aa).

The 109-residue stretch at Pro55–Ser163 folds into the sHSP domain.

The protein belongs to the small heat shock protein (HSP20) family. Interacts with DMPK; may enhance its kinase activity. As to expression, expressed preferentially in skeletal muscle and heart but not in the lens.

The protein localises to the cytoplasm. It is found in the nucleus. In terms of biological role, may regulate the kinase DMPK. This Homo sapiens (Human) protein is Heat shock protein beta-2 (HSPB2).